The sequence spans 360 residues: MAQNTLRLVEENGVDKSKALDAALSQIERAFGKGSIMRLGANDKVVEIETISTGSLGLDIALGVGGLPRGRIIEIYGPESSGKTTLALHTVAEAQKKGGICGFIDAEHALDPVYARKLGVDLENLLISQPDTGEQALEICDTLVRSGAVDVIVVDSVAALTPRAEIEGEMGESLPGMQARLMSQALRKLTASISRSNTMVIFINQIRMKIGVMFGSPETTTGGNALKFYASVRLDIRRIGSVKDREETVGNQTRVKVVKNKMAPPFKQVEFDIMYGEGVSKTGELVDLGVKAGVVEKAGAWFSYNSQRLGQGRENAKLFLRDNPEVAREIELALRQNAGLIAERFLEADKDGSLDDAAES.

77–84 (GPESSGKT) serves as a coordination point for ATP.

This sequence belongs to the RecA family.

The protein localises to the cytoplasm. Functionally, can catalyze the hydrolysis of ATP in the presence of single-stranded DNA, the ATP-dependent uptake of single-stranded DNA by duplex DNA, and the ATP-dependent hybridization of homologous single-stranded DNAs. It interacts with LexA causing its activation and leading to its autocatalytic cleavage. In Chelativorans sp. (strain BNC1), this protein is Protein RecA.